Here is a 305-residue protein sequence, read N- to C-terminus: Dihydroorotate dehydrogenase B (NAD(+)), catalytic subunit (305 aa).

Residues Ser23 and 47–48 (KG) each bind FMN. Residues Lys47 and 71 to 75 (NAIGL) each bind substrate. FMN contacts are provided by Asn101 and Asn129. Asn129 lines the substrate pocket. Residue Cys132 is the Nucleophile of the active site. The FMN site is built by Lys167 and Ile193. Residue 194–195 (NT) coordinates substrate. FMN contacts are provided by residues Gly219, 245–246 (GG), and 267–268 (GT).

This sequence belongs to the dihydroorotate dehydrogenase family. Type 1 subfamily. In terms of assembly, heterotetramer of 2 PyrK and 2 PyrD type B subunits. FMN serves as cofactor.

It is found in the cytoplasm. It catalyses the reaction (S)-dihydroorotate + NAD(+) = orotate + NADH + H(+). It participates in pyrimidine metabolism; UMP biosynthesis via de novo pathway; orotate from (S)-dihydroorotate (NAD(+) route): step 1/1. In terms of biological role, catalyzes the conversion of dihydroorotate to orotate with NAD(+) as electron acceptor. This Geobacter sulfurreducens (strain ATCC 51573 / DSM 12127 / PCA) protein is Dihydroorotate dehydrogenase B (NAD(+)), catalytic subunit (pyrD).